The primary structure comprises 214 residues: Phosphatidyl-N-methylethanolamine N-methyltransferase (214 aa).

Residues Met1–Lys19 are Lumenal-facing. The helical intramembrane region spans Thr20 to Ala40. At Arg41–Ala52 the chain is on the lumenal side. The helical transmembrane segment at Phe53 to Val74 threads the bilayer. Residues Arg75–Ala101 lie on the Cytoplasmic side of the membrane. Residues Tyr102–Thr122 traverse the membrane as a helical segment. Residue Ala106–Gly108 coordinates S-adenosyl-L-methionine. Residues Gly123–Tyr165 are Lumenal-facing. A helical transmembrane segment spans residues Gly166–Gln186. At Phe187–Leu214 the chain is on the cytoplasmic side. An S-adenosyl-L-methionine-binding site is contributed by Glu188–Asn189.

It belongs to the class VI-like SAM-binding methyltransferase superfamily. PEMT/PEM2 methyltransferase family.

It localises to the endoplasmic reticulum membrane. The protein localises to the mitochondrion membrane. The catalysed reaction is a 1,2-diacyl-sn-glycero-3-phospho-N-methylethanolamine + S-adenosyl-L-methionine = a 1,2-diacyl-sn-glycero-3-phospho-N,N-dimethylethanolamine + S-adenosyl-L-homocysteine + H(+). The enzyme catalyses a 1,2-diacyl-sn-glycero-3-phospho-N,N-dimethylethanolamine + S-adenosyl-L-methionine = a 1,2-diacyl-sn-glycero-3-phosphocholine + S-adenosyl-L-homocysteine + H(+). It participates in phospholipid metabolism; phosphatidylcholine biosynthesis. In terms of biological role, catalyzes the second two steps of the methylation pathway of phosphatidylcholine biosynthesis, the SAM-dependent methylation of phosphatidylmonomethylethanolamine (PMME) to phosphatidyldimethylethanolamine (PDME) and of PDME to phosphatidylcholine (PC). The chain is Phosphatidyl-N-methylethanolamine N-methyltransferase from Neurospora crassa (strain ATCC 24698 / 74-OR23-1A / CBS 708.71 / DSM 1257 / FGSC 987).